Here is a 568-residue protein sequence, read N- to C-terminus: MAVSSKSKTGRSPKPAKVQPSKKVESRKREHEEESSDSSESDNEKLVEELDDDFDEVAELLGDDIKDPEAKKDKKKEKKIQEEERTRELTKPTAESNHDDIVTDNFEEAGLSEPTLKAIKDMGFSKMTQVQAKTIPPLLAGRDVLGAAKTGSGKTLAFLIPAIEMLYSLRFKPRNGTGVVVVSPTRELALQIFGVARELMAHHSQTFGIVIGGANRRQEAEKLMKGVNLLIATPGRLLDHLQNTQGFVFKNVKALVIDEADRILEIGFEEEMKQIIKILPNEDRQSMLFSATQTTKVEDLARISLRPGPLYINVASESEASTVAGLEQGYVVCESDKRFLLLFSFLKRNVKKKIIVFLSSCNCVKYFGELLNYIDLPVLDLHGKQKQQKRTNTFFEFCNATQGILICTDVAARGLDIPAVDWIIQFDPPDDPRDYIHRVGRTARGTAGKGKSLMFLTPSELGFLRYLKAANVPLNEYEFPTNKIANVQSQLTKLIKGNYWLHQSAKDGYRSYLQAYASHHLKTVYQIDKLDLVKVAKSFGFDVPPKVNITIGASGKSIEKKHKKQKRA.

The tract at residues 1–100 is disordered; that stretch reads MAVSSKSKTG…KPTAESNHDD (100 aa). Residues 22 to 32 show a composition bias toward basic and acidic residues; the sequence is KKVESRKREHE. Positions 30–91 form a coiled coil; the sequence is EHEEESSDSS…EEERTRELTK (62 aa). Positions 49-62 are enriched in acidic residues; sequence ELDDDFDEVAELLG. Basic and acidic residues-rich tracts occupy residues 63–72 and 79–100; these read DDIKDPEAKK and KIQE…NHDD. The Q motif motif lies at 104 to 132; it reads DNFEEAGLSEPTLKAIKDMGFSKMTQVQA. Positions 135 to 311 constitute a Helicase ATP-binding domain; sequence IPPLLAGRDV…RISLRPGPLY (177 aa). 148–155 is a binding site for ATP; that stretch reads AKTGSGKT. The short motif at 258 to 261 is the DEAD box element; sequence DEAD. Residues 325-495 enclose the Helicase C-terminal domain; the sequence is GLEQGYVVCE…NVQSQLTKLI (171 aa). The Bipartite nuclear localization signal motif lies at 337-353; it reads KRFLLLFSFLKRNVKKK.

It belongs to the DEAD box helicase family. DDX18/HAS1 subfamily. In terms of assembly, associates in the nucleolus with the 60S and pre-60S ribosomal subunits.

It localises to the nucleus. The protein resides in the nucleolus. It catalyses the reaction ATP + H2O = ADP + phosphate + H(+). Its function is as follows. ATP-dependent RNA helicase involved in 40S ribosomal subunit biogenesis. Required for the processing and cleavage of 35S pre-rRNA at sites A0, A1, and A2, leading to mature 18S rRNA. In Debaryomyces hansenii (strain ATCC 36239 / CBS 767 / BCRC 21394 / JCM 1990 / NBRC 0083 / IGC 2968) (Yeast), this protein is ATP-dependent RNA helicase HAS1 (HAS1).